Here is a 389-residue protein sequence, read N- to C-terminus: Lipid-A-disaccharide synthase (389 aa).

This sequence belongs to the LpxB family.

It catalyses the reaction a lipid X + a UDP-2-N,3-O-bis[(3R)-3-hydroxyacyl]-alpha-D-glucosamine = a lipid A disaccharide + UDP + H(+). It functions in the pathway bacterial outer membrane biogenesis; LPS lipid A biosynthesis. In terms of biological role, condensation of UDP-2,3-diacylglucosamine and 2,3-diacylglucosamine-1-phosphate to form lipid A disaccharide, a precursor of lipid A, a phosphorylated glycolipid that anchors the lipopolysaccharide to the outer membrane of the cell. The sequence is that of Lipid-A-disaccharide synthase from Burkholderia orbicola (strain MC0-3).